A 453-amino-acid chain; its full sequence is Homogentisate 1,2-dioxygenase (453 aa).

Histidine 306 (proton acceptor) is an active-site residue. 2 residues coordinate Fe cation: histidine 349 and glutamate 355. Homogentisate contacts are provided by tyrosine 364 and histidine 385. Histidine 385 lines the Fe cation pocket.

Belongs to the homogentisate dioxygenase family. As to quaternary structure, hexamer; dimer of trimers. Fe cation serves as cofactor.

It carries out the reaction homogentisate + O2 = 4-maleylacetoacetate + H(+). It participates in amino-acid degradation; L-phenylalanine degradation; acetoacetate and fumarate from L-phenylalanine: step 4/6. Functionally, involved in the catabolism of homogentisate (2,5-dihydroxyphenylacetate or 2,5-OH-PhAc), a central intermediate in the degradation of phenylalanine and tyrosine. Catalyzes the oxidative ring cleavage of the aromatic ring of homogentisate to yield maleylacetoacetate. This is Homogentisate 1,2-dioxygenase from Rhizobium rhizogenes (strain K84 / ATCC BAA-868) (Agrobacterium radiobacter).